Reading from the N-terminus, the 84-residue chain is Metallothionein-like protein 4A (84 aa).

Residues 1–26 are disordered; sequence MADTGKGSSVAGCNDSCGCPSPCPGG.

The protein belongs to the metallothionein superfamily. Type 15 family. Expressed specifically in seeds.

It is found in the cytoplasm. It localises to the nucleus. Its subcellular location is the cell membrane. Its function is as follows. Metallothioneins have a high content of cysteine residues that bind various heavy metals. Functions as a metal chelator of copper (Cu) and zinc (Zn). Plays a role in storing and distributing Zn ion in seed. The polypeptide is Metallothionein-like protein 4A (MT4A) (Arabidopsis thaliana (Mouse-ear cress)).